Consider the following 121-residue polypeptide: Large ribosomal subunit protein eL18 (121 aa).

It belongs to the eukaryotic ribosomal protein eL18 family.

The polypeptide is Large ribosomal subunit protein eL18 (Methanospirillum hungatei JF-1 (strain ATCC 27890 / DSM 864 / NBRC 100397 / JF-1)).